The chain runs to 396 residues: Ribosomal RNA large subunit methyltransferase I (396 aa).

The region spanning 2–81 (SVRLVLAKGR…ESIDIAFFSR (80 aa)) is the PUA domain.

It belongs to the methyltransferase superfamily. RlmI family.

The protein localises to the cytoplasm. It catalyses the reaction cytidine(1962) in 23S rRNA + S-adenosyl-L-methionine = 5-methylcytidine(1962) in 23S rRNA + S-adenosyl-L-homocysteine + H(+). Its function is as follows. Specifically methylates the cytosine at position 1962 (m5C1962) of 23S rRNA. The chain is Ribosomal RNA large subunit methyltransferase I from Shigella boydii serotype 18 (strain CDC 3083-94 / BS512).